The sequence spans 103 residues: Small ribosomal subunit protein uS17 (103 aa).

Positions 78-103 (SHSPKADKSAGSTAPAPEAAAKEVSE) are disordered.

The protein belongs to the universal ribosomal protein uS17 family. Part of the 30S ribosomal subunit.

Functionally, one of the primary rRNA binding proteins, it binds specifically to the 5'-end of 16S ribosomal RNA. The sequence is that of Small ribosomal subunit protein uS17 from Parasynechococcus marenigrum (strain WH8102).